Reading from the N-terminus, the 722-residue chain is Dual specificity tyrosine-phosphorylation-regulated kinase 2 (722 aa).

Serine 25 carries the phosphoserine modification. Positions 54 to 127 (TTTSLNGNGN…SGELKCNTPM (74 aa)) are disordered. Positions 66 to 119 (GNSNSNNNNNIGSPVSSSTTNSSNGGNERGSSTKSNSSSGSGSSGNSASSTGSG) are enriched in low complexity. In terms of domain architecture, Protein kinase spans 198-494 (YEILEVIGKG…PDEAAHHEFL (297 aa)). ATP is bound by residues 204 to 212 (IGKGSFGQV) and lysine 227. Aspartate 324 (proton acceptor) is an active-site residue. A phosphotyrosine; by autocatalysis mark is found at tyrosine 356 and tyrosine 358. 4 disordered regions span residues 494-519 (LQPS…LNSV), 557-582 (TTKS…PDIK), 624-643 (GSGS…LPGT), and 679-722 (TTTH…FGRA). Residues 506-519 (RMSSSSSSSGLNSV) are compositionally biased toward low complexity. A compositionally biased stretch (polar residues) spans 557–576 (TTKSRQQPPSQSHGHAQSNG). Low complexity-rich tracts occupy residues 626–635 (GSTHHVSSAA) and 689–707 (GQQQ…MSHS).

The protein belongs to the protein kinase superfamily. CMGC Ser/Thr protein kinase family. MNB/DYRK subfamily. The cofactor is Mg(2+). Phosphorylated on serine/threonine residues.

The protein resides in the cytoplasm. The enzyme catalyses L-seryl-[protein] + ATP = O-phospho-L-seryl-[protein] + ADP + H(+). It catalyses the reaction L-threonyl-[protein] + ATP = O-phospho-L-threonyl-[protein] + ADP + H(+). It carries out the reaction L-tyrosyl-[protein] + ATP = O-phospho-L-tyrosyl-[protein] + ADP + H(+). Autophosphorylates on Tyr-356 and Tyr-358. Functionally, in vitro; can phosphorylate exogenous substrates on Ser and Thr residues. May have a physiological role in development being involved in cellular growth and differentiation. This Drosophila melanogaster (Fruit fly) protein is Dual specificity tyrosine-phosphorylation-regulated kinase 2.